Here is a 189-residue protein sequence, read N- to C-terminus: Holliday junction branch migration complex subunit RuvA (189 aa).

Positions 1–63 (MIHALNGKVE…DDGISLYGFL (63 aa)) are domain I. The segment at 64 to 135 (EVIKLKLFEK…ELKDTIKELD (72 aa)) is domain II. Residues 135–139 (DVSIN) form a flexible linker region. The interval 140-189 (EKDRKVLEAIEALVTLGFNRNQAKKAVNKVAAKDDKLDDIIKKALRFLSR) is domain III.

The protein belongs to the RuvA family. In terms of assembly, homotetramer. Forms an RuvA(8)-RuvB(12)-Holliday junction (HJ) complex. HJ DNA is sandwiched between 2 RuvA tetramers; dsDNA enters through RuvA and exits via RuvB. An RuvB hexamer assembles on each DNA strand where it exits the tetramer. Each RuvB hexamer is contacted by two RuvA subunits (via domain III) on 2 adjacent RuvB subunits; this complex drives branch migration. In the full resolvosome a probable DNA-RuvA(4)-RuvB(12)-RuvC(2) complex forms which resolves the HJ.

It localises to the cytoplasm. Its function is as follows. The RuvA-RuvB-RuvC complex processes Holliday junction (HJ) DNA during genetic recombination and DNA repair, while the RuvA-RuvB complex plays an important role in the rescue of blocked DNA replication forks via replication fork reversal (RFR). RuvA specifically binds to HJ cruciform DNA, conferring on it an open structure. The RuvB hexamer acts as an ATP-dependent pump, pulling dsDNA into and through the RuvAB complex. HJ branch migration allows RuvC to scan DNA until it finds its consensus sequence, where it cleaves and resolves the cruciform DNA. This chain is Holliday junction branch migration complex subunit RuvA, found in Thermosipho africanus (strain TCF52B).